The sequence spans 178 residues: Germinal center-associated signaling and motility protein (178 aa).

Position 99 is a phosphoserine (S99). Phosphotyrosine is present on Y148.

Interacts with ACTB and MYH2; the interaction with MYH2 is increased by IL6-induced phosphorylation. Interacts (via C-terminus) with ARHGEF11 (via DH domain). Interacts with ARHGEF12. Interacts with SYK; the interaction increases after B-cell receptor stimulation, resulting in enhanced SYK autophosphorylation and activity. Phosphorylation on tyrosine residues can be induced by IL6. Phosphorylation is mediated by LYN. In terms of processing, targeted by the ubiquitin E3 ligase subunit FBXO10 to mediate its ubiquitination and degradation. Expressed in diffuse large B-cell lymphoma (DLBCL) and several germinal center (GC)-like lymphoma cell lines (at protein level). Highly expressed in normal GC lymphocytes and GC-derived malignancies. Expressed in thymus and spleen.

It localises to the cytoplasm. It is found in the cell membrane. In terms of biological role, involved in the negative regulation of lymphocyte motility. It mediates the migration-inhibitory effects of IL6. Serves as a positive regulator of the RhoA signaling pathway. Enhancement of RhoA activation results in inhibition of lymphocyte and lymphoma cell motility by activation of its downstream effector ROCK. Is a regulator of B-cell receptor signaling, that acts through SYK kinase activation. This chain is Germinal center-associated signaling and motility protein (GCSAM), found in Homo sapiens (Human).